A 431-amino-acid chain; its full sequence is Translation initiation factor 2 subunit gamma (431 aa).

The region spanning 26-223 is the tr-type G domain; the sequence is QPCVNIGMVG…ALETQIPTPS (198 aa). The tract at residues 35–42 is G1; the sequence is GHVDHGKT. Asp38, Thr42, Gly63, and Ser65 together coordinate Mg(2+). A GTP-binding site is contributed by 38-43; the sequence is DHGKTT. Residues 63–67 form a G2 region; it reads GISIR. Residues Cys78, Cys81, Cys93, and Cys96 each contribute to the Zn(2+) site. Positions 110 to 113 are G3; the sequence is DAPG. GTP is bound by residues 166–169 and 201–203; these read NKID and SAQ. The tract at residues 166 to 169 is G4; that stretch reads NKID. Positions 201-203 are G5; sequence SAQ.

Belongs to the TRAFAC class translation factor GTPase superfamily. Classic translation factor GTPase family. EIF2G subfamily. Heterotrimer composed of an alpha, a beta and a gamma chain. Mg(2+) is required as a cofactor.

It carries out the reaction GTP + H2O = GDP + phosphate + H(+). Functionally, eIF-2 functions in the early steps of protein synthesis by forming a ternary complex with GTP and initiator tRNA. The polypeptide is Translation initiation factor 2 subunit gamma (Methanosarcina mazei (strain ATCC BAA-159 / DSM 3647 / Goe1 / Go1 / JCM 11833 / OCM 88) (Methanosarcina frisia)).